A 218-amino-acid polypeptide reads, in one-letter code: Pyrrolidone-carboxylate peptidase (218 aa).

Residues glutamate 81, cysteine 144, and histidine 169 contribute to the active site.

It belongs to the peptidase C15 family. Homotetramer.

The protein resides in the cytoplasm. It catalyses the reaction Release of an N-terminal pyroglutamyl group from a polypeptide, the second amino acid generally not being Pro.. Its function is as follows. Removes 5-oxoproline from various penultimate amino acid residues except L-proline. The sequence is that of Pyrrolidone-carboxylate peptidase (pcp) from Deinococcus radiodurans (strain ATCC 13939 / DSM 20539 / JCM 16871 / CCUG 27074 / LMG 4051 / NBRC 15346 / NCIMB 9279 / VKM B-1422 / R1).